We begin with the raw amino-acid sequence, 420 residues long: Cyclin-B2-1 (420 aa).

A disordered region spans residues 1 to 61 (MDRASENRRL…EKSGKEEQKP (61 aa)). A compositionally biased stretch (basic and acidic residues) spans 49–60 (PMLEKSGKEEQK).

This sequence belongs to the cyclin family. Cyclin AB subfamily. In terms of assembly, interacts with CDKB2-1. In terms of tissue distribution, expressed in the root apices.

Involved in the control of the cell cycle at the G2/M (mitosis) transition. May activate CDKB2-1 kinase. This is Cyclin-B2-1 (CYCB2-1) from Oryza sativa subsp. japonica (Rice).